The following is a 236-amino-acid chain: Orotidine 5'-phosphate decarboxylase (236 aa).

Substrate is bound by residues aspartate 14, lysine 36, 63–72 (DLKFHDIPNT), threonine 123, arginine 184, glutamine 193, glycine 213, and arginine 214. Catalysis depends on lysine 65, which acts as the Proton donor.

The protein belongs to the OMP decarboxylase family. Type 1 subfamily. As to quaternary structure, homodimer.

It carries out the reaction orotidine 5'-phosphate + H(+) = UMP + CO2. Its pathway is pyrimidine metabolism; UMP biosynthesis via de novo pathway; UMP from orotate: step 2/2. In terms of biological role, catalyzes the decarboxylation of orotidine 5'-monophosphate (OMP) to uridine 5'-monophosphate (UMP). The chain is Orotidine 5'-phosphate decarboxylase from Marinobacter nauticus (strain ATCC 700491 / DSM 11845 / VT8) (Marinobacter aquaeolei).